Consider the following 119-residue polypeptide: Hemerythrin-like protein (119 aa).

His26, His56, Glu60, His75, His79, His107, and Asp112 together coordinate Fe cation.

The protein belongs to the hemerythrin family.

Its function is as follows. Oxygen-binding protein. The oxygen-binding site contains two iron atoms. The chain is Hemerythrin-like protein (nfa1) from Naegleria fowleri (Brain eating amoeba).